Here is a 563-residue protein sequence, read N- to C-terminus: Arginine--tRNA ligase (563 aa).

The short motif at 120 to 130 is the 'HIGH' region element; it reads PNIAKPFHIGH.

This sequence belongs to the class-I aminoacyl-tRNA synthetase family. As to quaternary structure, monomer.

The protein localises to the cytoplasm. The enzyme catalyses tRNA(Arg) + L-arginine + ATP = L-arginyl-tRNA(Arg) + AMP + diphosphate. The sequence is that of Arginine--tRNA ligase from Clostridium botulinum (strain Langeland / NCTC 10281 / Type F).